The following is a 482-amino-acid chain: Pancreatic lipase-related protein 2 (482 aa).

The first 30 residues, 1 to 30 (MPMDVRGCLFPSVQMLLCWLVSLLLATVGG), serve as a signal peptide directing secretion. A disulfide bridge links cysteine 34 with cysteine 40. Asparagine 92 is a glycosylation site (N-linked (GlcNAc...) asparagine). The segment at 106-118 (IHGFIDKGEEGWL) is required for galactolipase activity. Residues cysteine 122 and cysteine 133 are joined by a disulfide bond. Serine 184 (nucleophile) is an active-site residue. Aspartate 208 (charge relay system) is an active-site residue. Residues glutamate 219, arginine 222, aspartate 224, and aspartate 227 each contribute to the Ca(2+) site. A disulfide bridge links cysteine 269 with cysteine 293. The segment at 270–292 (QKNILSTIVDINGIWEGTRNFAA) is required for galactolipase activity. Histidine 295 functions as the Charge relay system in the catalytic mechanism. Cystine bridges form between cysteine 317–cysteine 328 and cysteine 331–cysteine 336. 2 N-linked (GlcNAc...) asparagine glycosylation sites follow: asparagine 366 and asparagine 441. A PLAT domain is found at 370–482 (WRYKVSVTLS…EDVLQSLYPC (113 aa)). Cysteine 466 and cysteine 482 are joined by a disulfide.

This sequence belongs to the AB hydrolase superfamily. Lipase family. In terms of tissue distribution, expressed in acinar cells of pancreas (at protein level).

Its subcellular location is the secreted. The protein resides in the zymogen granule membrane. It is found in the cell projection. It localises to the neuron projection. The enzyme catalyses a triacylglycerol + H2O = a diacylglycerol + a fatty acid + H(+). It catalyses the reaction a 1,2-diacyl-3-O-(beta-D-galactosyl)-sn-glycerol + 2 H2O = 3-beta-D-galactosyl-sn-glycerol + 2 a fatty acid + 2 H(+). It carries out the reaction 1,2,3-tri-(9Z-octadecenoyl)-glycerol + H2O = di-(9Z)-octadecenoylglycerol + (9Z)-octadecenoate + H(+). The catalysed reaction is di-(9Z)-octadecenoylglycerol + H2O = (9Z-octadecenoyl)-glycerol + (9Z)-octadecenoate + H(+). The enzyme catalyses (9Z-octadecenoyl)-glycerol + H2O = glycerol + (9Z)-octadecenoate + H(+). It catalyses the reaction 1-(9Z-octadecenoyl)-glycerol + H2O = glycerol + (9Z)-octadecenoate + H(+). It carries out the reaction 1,2,3-tripropanoylglycerol + H2O = dipropanoylglycerol + propanoate + H(+). The catalysed reaction is 1,2,3-tributanoylglycerol + H2O = dibutanoylglycerol + butanoate + H(+). The enzyme catalyses 1,2,3-trioctanoylglycerol + H2O = dioctanoylglycerol + octanoate + H(+). It catalyses the reaction 1,2-didecanoylglycerol + H2O = decanoylglycerol + decanoate + H(+). It carries out the reaction long chain 1,2-diacyl-3-O-beta-D-galactosyl-sn-glycerol + H2O = long chain acyl-3-O-beta-D-galactosyl-sn-glycerol + a fatty acid + H(+). The catalysed reaction is 1,2-dioctanoyl-3-O-beta-D-galactosyl-sn-glycerol + H2O = octanoyl-3-(beta-D-galactosyl)-sn-glycerol + octanoate + H(+). The enzyme catalyses 1,2-didodecanoyl-3-beta-D-galactosyl-sn-glycerol + H2O = dodecanoyl-3-beta-D-galactosyl-sn-glycerol + dodecanoate + H(+). It catalyses the reaction 1-beta-D-galactosyl-2,3-didodecanoyl-sn-glycerol + H2O = 1-beta-D-galactosyl-dodecanoyl-sn-glycerol + dodecanoate + H(+). It carries out the reaction a 1,2-diacyl-3-O-[alpha-D-galactosyl-(1-&gt;6)-beta-D-galactosyl]-sn-glycerol + H2O = acyl-3-O-[alpha-D-galactosyl-(1-&gt;6)-beta-D-galactosyl]-sn-glycerol + a fatty acid + H(+). The catalysed reaction is long chain 1,2-diacyl-3-O-[alpha-D-galactosyl-(1-&gt;6)-beta-D-galactosyl]-sn-glycerol + H2O = long chain acyl-3-O-[alpha-D-galactosyl-(1-&gt;6)-beta-D-galactosyl]-sn-glycerol + a fatty acid + H(+). The enzyme catalyses 1,2-dioctanoyl-3-O-[alpha-D-galactosyl-(1-&gt;6)-beta-D-galactosyl]-sn-glycerol + H2O = octanoyl-3-O-[alpha-D-galactosyl-(1-&gt;6)-beta-D-galactosyl]-sn-glycerol + octanoate + H(+). It catalyses the reaction 1,2-didodecanoyl-3-O-[alpha-D-galactosyl-(1-&gt;6)-beta-D-galactosyl]-sn-glycerol + H2O = dodecanoyl-3-O-[alpha-D-galactosyl-(1-&gt;6)-beta-D-galactosyl]-sn-glycerol + dodecanoate + H(+). It carries out the reaction a 1,2-diacyl-sn-glycero-3-phosphocholine + H2O = a monoacyl-sn-glycero-3-phosphocholine + a fatty acid + H(+). It participates in glycerolipid metabolism; triacylglycerol degradation. The protein operates within glycolipid metabolism. Its activity is regulated as follows. CLPS stimulates triacylglycerol lipase activity. Triacylglycerol lipase activity is not inhibited by increasing bile salt concentration. In terms of biological role, lipase that primarily hydrolyzes triglycerides and galactosylglycerides. In neonates, may play a major role in pancreatic digestion of dietary fats such as milk fat globules enriched in long-chain triglycerides. Hydrolyzes short-, medium- and long-chain fatty acyls in triglycerides without apparent positional specificity. Can completely deacylate triacylglycerols. When the liver matures and bile salt synthesis increases, likely functions mainly as a galactolipase and monoacylglycerol lipase. Hydrolyzes monogalactosyldiglycerols (MGDG) and digalactosyldiacylglycerols (DGDG) present in a plant-based diet, releasing long-chain polyunsaturated fatty acids. Hydrolyzes medium- and long-chain fatty acyls in galactolipids. May act together with LIPF to hydrolyze partially digested triglycerides. Hydrolyzes long-chain monoglycerides with high efficiency. In cytotoxic T cells, contributes to perforin-dependent cell lysis, but is unlikely to mediate direct cytotoxicity. Also has low phospholipase activity. In neurons, required for the localization of the phospholipid 1-oleoyl-2-palmitoyl-PC (OPPC) to neurite tips through acyl chain remodeling of membrane phospholipids. The resulting OPPC-rich lipid membrane domain recruits the t-SNARE protein STX4 by selectively interacting with the STX4 transmembrane domain and this promotes surface expression of the dopamine transporter SLC6A3/DAT at neurite tips by facilitating fusion of SLC6A3-containing transport vesicles with the plasma membrane. The protein is Pancreatic lipase-related protein 2 of Mus musculus (Mouse).